Reading from the N-terminus, the 483-residue chain is Phosphoenolpyruvate carboxylase (483 aa).

Residues Met-1–Phe-20 are disordered.

It belongs to the PEPCase type 2 family. In terms of assembly, homotetramer. Requires Mg(2+) as cofactor.

The enzyme catalyses oxaloacetate + phosphate = phosphoenolpyruvate + hydrogencarbonate. With respect to regulation, inhibited by NaCl, KCl, ATP, ADP, GTP and aspartate. Unlike E.coli, not regulated by acetyl-CoA. In terms of biological role, catalyzes the irreversible beta-carboxylation of phosphoenolpyruvate (PEP) to form oxaloacetate (OAA), a four-carbon dicarboxylic acid source for the tricarboxylic acid cycle. The chain is Phosphoenolpyruvate carboxylase (ppcA) from Methanothermobacter thermautotrophicus (strain ATCC 29096 / DSM 1053 / JCM 10044 / NBRC 100330 / Delta H) (Methanobacterium thermoautotrophicum).